A 411-amino-acid polypeptide reads, in one-letter code: Citrate synthase (411 aa).

Catalysis depends on residues H304 and D363.

It belongs to the citrate synthase family.

It carries out the reaction oxaloacetate + acetyl-CoA + H2O = citrate + CoA + H(+). It participates in carbohydrate metabolism; tricarboxylic acid cycle; isocitrate from oxaloacetate: step 1/2. The sequence is that of Citrate synthase (gltA) from Rickettsia conorii subsp. caspia (strain A-167) (Astrakhan rickettsia).